Here is a 115-residue protein sequence, read N- to C-terminus: MTVQPFSPDSDLTLDEAMDELVSAEDFLEFFGVPFDQDVVHVNRLHIMQRYHDYLSKAGDLDEHDDQARYAVFQKLLARAYLDFVESDALTEKVFKVFRMHEPQKTFVSIDQLLS.

This sequence belongs to the NifW family. Homotrimer; associates with NifD.

Functionally, may protect the nitrogenase Fe-Mo protein from oxidative damage. This is Nitrogenase-stabilizing/protective protein NifW from Azotobacter vinelandii (strain DJ / ATCC BAA-1303).